A 392-amino-acid polypeptide reads, in one-letter code: Alanine racemase 2 (392 aa).

The Proton acceptor; specific for D-alanine role is filled by Lys-40. Lys-40 carries the post-translational modification N6-(pyridoxal phosphate)lysine. Arg-138 serves as a coordination point for substrate. Tyr-266 (proton acceptor; specific for L-alanine) is an active-site residue. Met-314 contacts substrate.

The protein belongs to the alanine racemase family. It depends on pyridoxal 5'-phosphate as a cofactor.

It carries out the reaction L-alanine = D-alanine. It participates in amino-acid biosynthesis; D-alanine biosynthesis; D-alanine from L-alanine: step 1/1. In terms of biological role, catalyzes the interconversion of L-alanine and D-alanine. May also act on other amino acids. The polypeptide is Alanine racemase 2 (alr2) (Oceanobacillus iheyensis (strain DSM 14371 / CIP 107618 / JCM 11309 / KCTC 3954 / HTE831)).